Consider the following 860-residue polypeptide: MKLSWLEAAALTAASVVSADELAFSPPFYPSPWANGQGEWAEAYQRAVAIVSQMTLDEKVNLTTGTGWELEKCVGQTGGVPRLNIGGMCLQDSPLGIRDSDYNSAFPAGVNVAATWDKNLAYLRGQAMGQEFSDKGIDVQLGPAAGPLGRSPDGGRNWEGFSPDPALTGVLFAETIKGIQDAGVVATAKHYILNEQEHFRQVAEAAGYGFNISDTISSNVDDKTIHEMYLWPFADAVRAGVGAIMCSYNQINNSYGCQNSYTLNKLLKAELGFQGFVMSDWGAHHSGVGSALAGLDMSMPGDITFDSATSFWGTNLTIAVLNGTVPQWRVDDMAVRIMAAYYKVGRDRLYQPPNFSSWTRDEYGFKYFYPQEGPYEKVNHFVNVQRNHSEVIRKLGADSTVLLKNNNALPLTGKERKVAILGEDAGSNSYGANGCSDRGCDNGTLAMAWGSGTAEFPYLVTPEQAIQAEVLKHKGSVYAITDNWALSQVETLAKQASVSLVFVNSDAGEGYISVDGNEGDRNNLTLWKNGDNLIKAAANNCNNTIVVIHSVGPVLVDEWYDHPNVTAILWAGLPGQESGNSLADVLYGRVNPGAKSPFTWGKTREAYGDYLVRELNNGNGAPQDDFSEGVFIDYRGFDKRNETPIYEFGHGLSYTTFNYSGLHIQVLNASSNAQVATETGAAPTFGQVGNASDYVYPEGLTRISKFIYPWLNSTDLKASSGDPYYGVDTAEHVPEGATDGSPQPVLPAGGGSGGNPRLYDELIRVSVTVKNTGRVAGDAVPQLYVSLGGPNEPKVVLRKFDRLTLKPSEETVWTTTLTRRDLSNWDVAAQDWVITSYPKKVHVGSSSRQLPLHAALPKVQ.

The first 19 residues, Met1 to Ala19, serve as a signal peptide directing secretion. Asn61, Asn211, and Asn252 each carry an N-linked (GlcNAc...) asparagine glycan. The active site involves Asp280. 12 N-linked (GlcNAc...) asparagine glycosylation sites follow: Asn315, Asn322, Asn354, Asn387, Asn442, Asn523, Asn542, Asn564, Asn658, Asn668, Asn690, and Asn712.

This sequence belongs to the glycosyl hydrolase 3 family.

The enzyme catalyses Hydrolysis of terminal, non-reducing beta-D-glucosyl residues with release of beta-D-glucose.. It participates in glycan metabolism; cellulose degradation. This is Beta-glucosidase 1 from Aspergillus aculeatus.